The following is a 328-amino-acid chain: Malate dehydrogenase (328 aa).

An NAD(+)-binding site is contributed by 13-19 (GGKGQIA). Residues Arg94 and Arg100 each contribute to the substrate site. Residues Asn107, Gln114, and 131 to 133 (VGN) each bind NAD(+). Asn133 and Arg164 together coordinate substrate. His189 acts as the Proton acceptor in catalysis.

Belongs to the LDH/MDH superfamily. MDH type 2 family.

The enzyme catalyses (S)-malate + NAD(+) = oxaloacetate + NADH + H(+). In terms of biological role, catalyzes the reversible oxidation of malate to oxaloacetate. The sequence is that of Malate dehydrogenase from Chlamydia pneumoniae (Chlamydophila pneumoniae).